A 329-amino-acid chain; its full sequence is RNA-binding protein CP33, chloroplastic (329 aa).

A chloroplast-targeting transit peptide spans 1 to 69 (MSSAYCSSAV…NIRRHRFFCA (69 aa)). Over residues 77–104 (ADDEIQASVEEEEEVEEEGDEGEEEVEE) the composition is skewed to acidic residues. Disordered stretches follow at residues 77–117 (ADDE…EEGR) and 296–329 (SEREKPTVSPPSVEEGETEEASLESNEVLSNVSA). RRM domains follow at residues 116–194 (GRLY…FPEV) and 219–297 (HKVY…LASE).

It localises to the plastid. Its subcellular location is the chloroplast. In terms of biological role, could be involved in splicing and/or processing of chloroplast RNAs. In Arabidopsis thaliana (Mouse-ear cress), this protein is RNA-binding protein CP33, chloroplastic.